The sequence spans 191 residues: 3-isopropylmalate dehydratase small subunit (191 aa).

It belongs to the LeuD family. LeuD type 1 subfamily. Heterodimer of LeuC and LeuD.

The catalysed reaction is (2R,3S)-3-isopropylmalate = (2S)-2-isopropylmalate. It participates in amino-acid biosynthesis; L-leucine biosynthesis; L-leucine from 3-methyl-2-oxobutanoate: step 2/4. Catalyzes the isomerization between 2-isopropylmalate and 3-isopropylmalate, via the formation of 2-isopropylmaleate. The protein is 3-isopropylmalate dehydratase small subunit of Solibacter usitatus (strain Ellin6076).